We begin with the raw amino-acid sequence, 162 residues long: Cyclic pyranopterin monophosphate synthase (162 aa).

Residues 79-81 and 117-118 each bind substrate; these read LCH and ME. Asp-132 is a catalytic residue.

It belongs to the MoaC family. Homohexamer; trimer of dimers.

The enzyme catalyses (8S)-3',8-cyclo-7,8-dihydroguanosine 5'-triphosphate = cyclic pyranopterin phosphate + diphosphate. It participates in cofactor biosynthesis; molybdopterin biosynthesis. Functionally, catalyzes the conversion of (8S)-3',8-cyclo-7,8-dihydroguanosine 5'-triphosphate to cyclic pyranopterin monophosphate (cPMP). This Bordetella avium (strain 197N) protein is Cyclic pyranopterin monophosphate synthase.